The chain runs to 479 residues: B-cell CLL/lymphoma 6 member B protein (479 aa).

The BTB domain occupies 38–105 (TDVTLLVGGQ…MYTSRLRLSP (68 aa)). Disordered stretches follow at residues 143–190 (RPLE…PDPK) and 210–259 (GSLV…LSPT). Over residues 147–160 (AEPPTPPTAPPPGS) the composition is skewed to pro residues. The span at 162 to 172 (RRSEGHPDPPT) shows a compositional bias: basic and acidic residues. Positions 234–244 (SSSSSSSSSSS) are enriched in low complexity. C2H2-type zinc fingers lie at residues 328–350 (YKCQLCRSSFRYKGNLASHRTVH), 356–378 (YHCSICGARFNRPANLKTHSRIH), 384–406 (YKCETCGSRFVQVAHLRAHVLIH), 412–434 (YPCPTCGTRFRHLQTLKSHVRIH), and 440–463 (YHCDPCGLHFRHKSQLRLHLRQKH).

As to quaternary structure, associates with BCL6 through the BTB domain. Ubiquitously expressed with higher expression found in heart and placenta.

It is found in the nucleus. In terms of biological role, acts as a sequence-specific transcriptional repressor in association with BCL6. May function in a narrow stage or be related to some events in the early B-cell development. The chain is B-cell CLL/lymphoma 6 member B protein (BCL6B) from Homo sapiens (Human).